The following is a 963-amino-acid chain: Vacuolar membrane protease (963 aa).

Over 1-15 (MVSSRRGFNPIAFTP) the chain is Cytoplasmic. A helical membrane pass occupies residues 16 to 36 (WPVTILTSLVYLALIIPIIVV). Topologically, residues 37 to 391 (HHLVPPAPKQ…FQLNTLFGLS (355 aa)) are vacuolar. Asn-111 and Asn-114 each carry an N-linked (GlcNAc...) asparagine glycan. Positions 170 and 182 each coordinate Zn(2+). Glu-216 acts as the Proton acceptor in catalysis. Residues Glu-217, Glu-242, and His-315 each coordinate Zn(2+). The helical transmembrane segment at 392–412 (VALLVVAPLLLILTSVALFAV) threads the bilayer. Over 413–441 (DKMYMFSMYTYLSESGGQVSLYGLRGMFR) the chain is Cytoplasmic. Residues 442-462 (FPLILGISTALTVALAFLIMK) form a helical membrane-spanning segment. Residues 463-473 (VNPFIIYSSPY) are Vacuolar-facing. Residues 474 to 494 (AVWSMMLSTCMFFAWFISCVA) form a helical membrane-spanning segment. Residues 495–504 (DFARPSALHR) are Cytoplasmic-facing. Residues 505–525 (AYAFSWMFGILWVFLVIATVY) form a helical membrane-spanning segment. Over 526-535 (QRQHGIASSY) the chain is Vacuolar. The helical transmembrane segment at 536–556 (FIVFYFAGVSVATWISYLELF) threads the bilayer. The Cytoplasmic portion of the chain corresponds to 557 to 668 (GLSTTQDYAR…WSIYLVSSAW (112 aa)). Residues 569–618 (SRLSDRTPSSDSHLLAPSADELPSSGSVAGRDFNPEDVEDEEPTESTSLL) are disordered. Residues 603–612 (PEDVEDEEPT) show a composition bias toward acidic residues. Residues 669–689 (ILQFLLVAPIVLILLGQLGLF) traverse the membrane as a helical segment. Residues 690–705 (LTSATYQIGADGGSQF) lie on the Vacuolar side of the membrane. A helical membrane pass occupies residues 706–726 (IIYIGIAVLSVLILLPLFPFI). Over 727 to 732 (HRFTYH) the chain is Cytoplasmic. A helical transmembrane segment spans residues 733 to 753 (IPTFMLFVLIGTLVYNLTAFP). The Vacuolar segment spans residues 754-963 (FSHNSRLKVA…LVEGSYSFKL (210 aa)). Asn-835 carries an N-linked (GlcNAc...) asparagine glycan.

It belongs to the peptidase M28 family. The cofactor is Zn(2+).

The protein resides in the vacuole membrane. In terms of biological role, may be involved in vacuolar sorting and osmoregulation. The sequence is that of Vacuolar membrane protease from Arthroderma gypseum (strain ATCC MYA-4604 / CBS 118893) (Microsporum gypseum).